A 280-amino-acid polypeptide reads, in one-letter code: Urease accessory protein UreD (280 aa).

It belongs to the UreD family. As to quaternary structure, ureD, UreF and UreG form a complex that acts as a GTP-hydrolysis-dependent molecular chaperone, activating the urease apoprotein by helping to assemble the nickel containing metallocenter of UreC. The UreE protein probably delivers the nickel.

It is found in the cytoplasm. In terms of biological role, required for maturation of urease via the functional incorporation of the urease nickel metallocenter. The polypeptide is Urease accessory protein UreD (Pseudomonas aeruginosa (strain UCBPP-PA14)).